Consider the following 324-residue polypeptide: Protein translocase subunit SecF (324 aa).

6 helical membrane-spanning segments follow: residues 16–36, 145–165, 174–194, 201–221, 247–269, and 276–295; these read FFWAAPVTFGFSVFLMAASLV, LIRSAILAVAAACAGIAVYIW, LGSVAALIHDVLVTIGVFALF, TTVAALLTVLGYSINDTVVVF, TLSRTIMTLMTTLIALVSLLVFG, and FVFAITFGVVIGTYSSVYMA.

It belongs to the SecD/SecF family. SecF subfamily. As to quaternary structure, forms a complex with SecD. Part of the essential Sec protein translocation apparatus which comprises SecA, SecYEG and auxiliary proteins SecDF-YajC and YidC.

It localises to the cell inner membrane. Functionally, part of the Sec protein translocase complex. Interacts with the SecYEG preprotein conducting channel. SecDF uses the proton motive force (PMF) to complete protein translocation after the ATP-dependent function of SecA. This is Protein translocase subunit SecF from Cereibacter sphaeroides (strain ATCC 17023 / DSM 158 / JCM 6121 / CCUG 31486 / LMG 2827 / NBRC 12203 / NCIMB 8253 / ATH 2.4.1.) (Rhodobacter sphaeroides).